The following is a 366-amino-acid chain: tRNA/tmRNA (uracil-C(5))-methyltransferase (366 aa).

The S-adenosyl-L-methionine site is built by Q190, Y218, N223, E239, and D299. C324 acts as the Nucleophile in catalysis. Catalysis depends on E358, which acts as the Proton acceptor.

Belongs to the class I-like SAM-binding methyltransferase superfamily. RNA M5U methyltransferase family. TrmA subfamily.

The enzyme catalyses uridine(54) in tRNA + S-adenosyl-L-methionine = 5-methyluridine(54) in tRNA + S-adenosyl-L-homocysteine + H(+). It catalyses the reaction uridine(341) in tmRNA + S-adenosyl-L-methionine = 5-methyluridine(341) in tmRNA + S-adenosyl-L-homocysteine + H(+). Its function is as follows. Dual-specificity methyltransferase that catalyzes the formation of 5-methyluridine at position 54 (m5U54) in all tRNAs, and that of position 341 (m5U341) in tmRNA (transfer-mRNA). This Salmonella agona (strain SL483) protein is tRNA/tmRNA (uracil-C(5))-methyltransferase.